A 478-amino-acid polypeptide reads, in one-letter code: POU domain, class 2, transcription factor 2 (478 aa).

5 disordered regions span residues 1–82 (MVHS…PPQA), 167–199 (QAVTRPTLSDPHLSHPQPPKCLEPPSHPEEASD), 275–298 (SSLPSPNQLSRPSLGFDGLPGRRR), 357–391 (PCSAAPMLPSPGKPASYSPHLVTPQGGAGTLPLSQ), and 409–478 (TLHP…PYQP). Over residues 12–37 (RMSKPLEAEKQGLDSPSEHTDTERNG) the composition is skewed to basic and acidic residues. Residues 38–60 (PDTNHQNPQNKTSPFSVSPTGPS) show a composition bias toward polar residues. A POU-specific domain is found at 195-269 (EEASDLEELE…LLEKWLNDAE (75 aa)). Positions 275 to 285 (SSLPSPNQLSR) are enriched in polar residues. A DNA-binding region (homeobox) is located at residues 297–356 (RRKKRTSIETNVRFALEKSFLANQKPTSEEILLIAEQLHMEKEVIRVWFCNRRQKEKRIN). The leucine-zipper stretch occupies residues 389-410 (LSQASSSLSTTVTTLSSAVGTL). Residues 416 to 425 (AGGGAAGGGA) show a composition bias toward gly residues.

It belongs to the POU transcription factor family. Class-2 subfamily. In terms of assembly, interacts with NR3C1, AR and PGR. Interacts with POU2AF1; the interaction increases POU2F2 transactivation activity. Predominantly expressed in B-cells.

It is found in the nucleus. Its activity is regulated as follows. Transactivation activity is enhanced by transcriptional coactivator POU2AF1. Its function is as follows. Transcription factor that specifically binds to the octamer motif (5'-ATTTGCAT-3'). Regulates IL6 expression in B cells with POU2AF1. Regulates transcription in a number of tissues in addition to activating immunoglobulin gene expression. Modulates transcription transactivation by NR3C1, AR and PGR. In Sus scrofa (Pig), this protein is POU domain, class 2, transcription factor 2 (POU2F2).